Consider the following 187-residue polypeptide: Putative manganese efflux pump MntP (187 aa).

A run of 6 helical transmembrane segments spans residues 3–23 (FYSL…VSLC), 35–55 (HYLI…TIGY), 56–76 (FIGI…AFIL), 107–127 (LALA…FAFL), 129–149 (VNLL…CIIA), and 166–186 (LLGG…HLFF).

It belongs to the MntP (TC 9.B.29) family.

The protein localises to the cell inner membrane. Its function is as follows. Probably functions as a manganese efflux pump. The polypeptide is Putative manganese efflux pump MntP (Campylobacter jejuni subsp. doylei (strain ATCC BAA-1458 / RM4099 / 269.97)).